A 29-amino-acid chain; its full sequence is GLVPCGETCFTGKCYTPGCSCSYPICKKN.

Residues G1–N29 constitute a cross-link (cyclopeptide (Gly-Asn)). Cystine bridges form between C5/C19, C9/C21, and C14/C26.

In terms of processing, this is a cyclic peptide.

Its function is as follows. Probably participates in a plant defense mechanism. Has hemolytic activity. This chain is Cycloviolacin-O15, found in Viola odorata (Sweet violet).